A 284-amino-acid polypeptide reads, in one-letter code: Pantothenate synthetase (284 aa).

30–37 (MGNLHEGH) lines the ATP pocket. Catalysis depends on His37, which acts as the Proton donor. Gln61 is a binding site for (R)-pantoate. Residue Gln61 coordinates beta-alanine. 149–152 (GEKD) is a binding site for ATP. Gln155 contacts (R)-pantoate. ATP-binding positions include Val178 and 186 to 189 (LSSR).

It belongs to the pantothenate synthetase family. As to quaternary structure, homodimer.

The protein resides in the cytoplasm. The catalysed reaction is (R)-pantoate + beta-alanine + ATP = (R)-pantothenate + AMP + diphosphate + H(+). It functions in the pathway cofactor biosynthesis; (R)-pantothenate biosynthesis; (R)-pantothenate from (R)-pantoate and beta-alanine: step 1/1. Functionally, catalyzes the condensation of pantoate with beta-alanine in an ATP-dependent reaction via a pantoyl-adenylate intermediate. The protein is Pantothenate synthetase of Yersinia enterocolitica serotype O:8 / biotype 1B (strain NCTC 13174 / 8081).